A 612-amino-acid chain; its full sequence is Dihydroxy-acid dehydratase (612 aa).

Asp-81 serves as a coordination point for Mg(2+). Cys-122 is a [2Fe-2S] cluster binding site. Asp-123 and Lys-124 together coordinate Mg(2+). N6-carboxylysine is present on Lys-124. Cys-193 is a [2Fe-2S] cluster binding site. Position 489 (Glu-489) interacts with Mg(2+). Ser-515 acts as the Proton acceptor in catalysis.

Belongs to the IlvD/Edd family. Homodimer. [2Fe-2S] cluster serves as cofactor. Requires Mg(2+) as cofactor.

The catalysed reaction is (2R)-2,3-dihydroxy-3-methylbutanoate = 3-methyl-2-oxobutanoate + H2O. The enzyme catalyses (2R,3R)-2,3-dihydroxy-3-methylpentanoate = (S)-3-methyl-2-oxopentanoate + H2O. Its pathway is amino-acid biosynthesis; L-isoleucine biosynthesis; L-isoleucine from 2-oxobutanoate: step 3/4. The protein operates within amino-acid biosynthesis; L-valine biosynthesis; L-valine from pyruvate: step 3/4. Functions in the biosynthesis of branched-chain amino acids. Catalyzes the dehydration of (2R,3R)-2,3-dihydroxy-3-methylpentanoate (2,3-dihydroxy-3-methylvalerate) into 2-oxo-3-methylpentanoate (2-oxo-3-methylvalerate) and of (2R)-2,3-dihydroxy-3-methylbutanoate (2,3-dihydroxyisovalerate) into 2-oxo-3-methylbutanoate (2-oxoisovalerate), the penultimate precursor to L-isoleucine and L-valine, respectively. In Ectopseudomonas mendocina (strain ymp) (Pseudomonas mendocina), this protein is Dihydroxy-acid dehydratase.